Here is a 254-residue protein sequence, read N- to C-terminus: Coenzyme F420:L-glutamate ligase (254 aa).

GTP contacts are provided by residues 11–14 (IPLI), 40–41 (ST), and K45. D109 is a binding site for a divalent metal cation. N112 is a binding site for GTP. D150, T151, and E208 together coordinate a divalent metal cation. 206–213 (MGEGAGGI) serves as a coordination point for GTP.

This sequence belongs to the CofE family. As to quaternary structure, homodimer. Mg(2+) serves as cofactor. Mn(2+) is required as a cofactor. It depends on K(+) as a cofactor.

The catalysed reaction is oxidized coenzyme F420-0 + GTP + L-glutamate = oxidized coenzyme F420-1 + GDP + phosphate + H(+). The enzyme catalyses oxidized coenzyme F420-1 + GTP + L-glutamate = oxidized coenzyme F420-2 + GDP + phosphate + H(+). The protein operates within cofactor biosynthesis; coenzyme F420 biosynthesis. In terms of biological role, catalyzes the GTP-dependent successive addition of two or more gamma-linked L-glutamates to the L-lactyl phosphodiester of 7,8-didemethyl-8-hydroxy-5-deazariboflavin (F420-0) to form coenzyme F420-0-glutamyl-glutamate (F420-2) or polyglutamated F420 derivatives. The protein is Coenzyme F420:L-glutamate ligase of Methanosarcina acetivorans (strain ATCC 35395 / DSM 2834 / JCM 12185 / C2A).